Consider the following 801-residue polypeptide: MDEDEFELQPQEPNSFFDGIGADATHMDGDQIVVEIQEAVFVSNIVDSDITVHNFVPDDPDSVVIQDVIEDVVIEEDVQCSDILEEADVSENVIIPEQVLESDVTEEVSLPHCTVPDDVLASDITSTSTSMPEHVLTSESMHVCDIGHVEHMVHDSVVEAEIITDPLTSDIVSEEVLVADCAPEAIIDASGISVDQQDNDKASCEDYLMISLDDAGKIEHDGSTGVTIDAESEMDPCKVDSTCPEVIKVYIFKADPGEDDLGGTVDIVESEPENDHGVELLDQNSSIRVPREKMVYMTVNDSQQEDEDLNVAEIADEVYMEVIVGEEDAAVAAAAAAVHEQQIDEDEMKTFVPIAWAAAYGNNSDGIENRNGTASALLHIDESAGLGRLAKQKPKKKRRPDSRQYQTAIIIGPDGHPLTVYPCMICGKKFKSRGFLKRHMKNHPEHLAKKKYHCTDCDYTTNKKISLHNHLESHKLTSKAEKAIECDECGKHFSHAGALFTHKMVHKEKGANKMHKCKFCEYETAEQGLLNRHLLAVHSKNFPHICVECGKGFRHPSELKKHMRIHTGEKPYQCQYCEYRSADSSNLKTHIKTKHSKEMPFKCDICLLTFSDTKEVQQHTLVHQESKTHQCLHCDHKSSNSSDLKRHVISVHTKDYPHKCEMCEKGFHRPSELKKHVAVHKGKKMHQCRHCDFKIADPFVLSRHILSVHTKDLPFRCKRCRKGFRQQNELKKHMKTHSGRKVYQCEYCEYSTTDASGFKRHVISIHTKDYPHRCEYCKKGFRRPSEKNQHIMRHHKEVGLP.

S270 is modified (phosphoserine). The segment at 421 to 443 (YPCMICGKKFKSRGFLKRHMKNH) adopts a C2H2-type 1 zinc-finger fold. The C2H2-type 2; atypical zinc finger occupies 452 to 474 (YHCTDCDYTTNKKISLHNHLESH). 11 consecutive C2H2-type zinc fingers follow at residues 484–506 (IECDECGKHFSHAGALFTHKMVH), 515–538 (HKCKFCEYETAEQGLLNRHLLAVH), 544–566 (HICVECGKGFRHPSELKKHMRIH), 572–595 (YQCQYCEYRSADSSNLKTHIKTKH), 601–623 (FKCDICLLTFSDTKEVQQHTLVH), 629–652 (HQCLHCDHKSSNSSDLKRHVISVH), 658–680 (HKCEMCEKGFHRPSELKKHVAVH), 686–709 (HQCRHCDFKIADPFVLSRHILSVH), 715–737 (FRCKRCRKGFRQQNELKKHMKTH), 743–766 (YQCEYCEYSTTDASGFKRHVISIH), and 772–795 (HRCEYCKKGFRRPSEKNQHIMRHH).

Belongs to the krueppel C2H2-type zinc-finger protein family. ZFX/ZFY subfamily.

It localises to the nucleus. Probable transcriptional activator. Binds to the consensus sequence 5'-AGGCCY-3'. The polypeptide is Zinc finger Y-chromosomal protein (ZFY) (Gorilla gorilla gorilla (Western lowland gorilla)).